Consider the following 666-residue polypeptide: MYLLILFLPLLGSLISGFGGRWLGCRGTNTFSTLCVVVSSLFSLLAFFEIGLTNTTCTIFLVSWIKSGAFYVSWGFLFDSLTVTMLVVITLVSSLVHIYSIKYMENDPHQPRFMSYLEIFTFFMLILVTADNLIQMFLGWEGVGLASYLLINFWYTRLAANQSAIKALIVNRVGDFGLSLGIFLIFWVFNSVDYSVIFSLVPLFDNQFLTFLGFKLHVLTLISLFLFIGAIGKSAQLGLHTWLPDAMEGPTPVSALIHAATMVTAGVFLMIRFSPLLEFSPTILFILITFGSLTAFFAAVTGVFQHDLKRVIAYSTCSQLGYMIFSCGMSCYDVSLFHLANHAFFKALLFLSAGSVIHAVSNEQDMRRMGSLLKFMPLTYSVMLIGTLALIGFPFLTGFYSKDFILELTQISSYSNLQMSYISFACWLGTMSVFFTSFYSFRLIYLTFLNNTNLAKSSLNLVHESSLLMIFPLIILSIGSIFAGYLIRDLFVGSGSDFWGAAIFILPKHSTFIEAEELPIVVKWLPFILSLLGIFFASFVQIFLKTFYFKSNLQNLLSFFTFLINKKWYWDVLYNRLIVLPILNFGYSISFKILDRGFIELSGPYGFTKFVSFWSQILIKLQTGQITHYLFFMIFTFCSFSIILVYSYINLTFNLLLLFFTLFFFI.

Transmembrane regions (helical) follow at residues 3-23, 31-51, 59-78, 82-101, 119-139, 168-190, 211-231, 251-271, 283-303, 311-333, 337-357, 375-395, 421-441, 467-487, 524-544, 572-594, and 629-649; these read LLILFLPLLGSLISGFGGRWL, FSTLCVVVSSLFSLLAFFEIG, IFLVSWIKSGAFYVSWGFLF, TVTMLVVITLVSSLVHIYSI, IFTFFMLILVTADNLIQMFLG, LIVNRVGDFGLSLGIFLIFWVFN, FLGFKLHVLTLISLFLFIGAI, TPVSALIHAATMVTAGVFLMI, ILFILITFGSLTAFFAAVTGV, VIAYSTCSQLGYMIFSCGMSCYD, FHLANHAFFKALLFLSAGSVI, FMPLTYSVMLIGTLALIGFPF, YISFACWLGTMSVFFTSFYSF, LLMIFPLIILSIGSIFAGYLI, WLPFILSLLGIFFASFVQIFL, VLYNRLIVLPILNFGYSISFKIL, and YLFFMIFTFCSFSIILVYSYI.

This sequence belongs to the complex I subunit 5 family.

It is found in the mitochondrion inner membrane. The catalysed reaction is a ubiquinone + NADH + 5 H(+)(in) = a ubiquinol + NAD(+) + 4 H(+)(out). Functionally, core subunit of the mitochondrial membrane respiratory chain NADH dehydrogenase (Complex I) that is believed to belong to the minimal assembly required for catalysis. Complex I functions in the transfer of electrons from NADH to the respiratory chain. The immediate electron acceptor for the enzyme is believed to be ubiquinone. The protein is NADH-ubiquinone oxidoreductase chain 5 (ND5) of Chondrus crispus (Carrageen Irish moss).